We begin with the raw amino-acid sequence, 188 residues long: Elongation factor P (188 aa).

This sequence belongs to the elongation factor P family.

It localises to the cytoplasm. It functions in the pathway protein biosynthesis; polypeptide chain elongation. In terms of biological role, involved in peptide bond synthesis. Stimulates efficient translation and peptide-bond synthesis on native or reconstituted 70S ribosomes in vitro. Probably functions indirectly by altering the affinity of the ribosome for aminoacyl-tRNA, thus increasing their reactivity as acceptors for peptidyl transferase. The protein is Elongation factor P of Parabacteroides distasonis (strain ATCC 8503 / DSM 20701 / CIP 104284 / JCM 5825 / NCTC 11152).